Consider the following 327-residue polypeptide: tRNA-dihydrouridine(20/20a) synthase (327 aa).

FMN contacts are provided by residues 11–13 (PML) and Gln63. Cys93 acts as the Proton donor in catalysis. FMN-binding positions include Lys132, His165, 205-207 (NGG), and 227-228 (GR).

Belongs to the Dus family. DusA subfamily. Requires FMN as cofactor.

The enzyme catalyses 5,6-dihydrouridine(20) in tRNA + NADP(+) = uridine(20) in tRNA + NADPH + H(+). It catalyses the reaction 5,6-dihydrouridine(20) in tRNA + NAD(+) = uridine(20) in tRNA + NADH + H(+). The catalysed reaction is 5,6-dihydrouridine(20a) in tRNA + NADP(+) = uridine(20a) in tRNA + NADPH + H(+). It carries out the reaction 5,6-dihydrouridine(20a) in tRNA + NAD(+) = uridine(20a) in tRNA + NADH + H(+). Its function is as follows. Catalyzes the synthesis of 5,6-dihydrouridine (D), a modified base found in the D-loop of most tRNAs, via the reduction of the C5-C6 double bond in target uridines. Specifically modifies U20 and U20a in tRNAs. This is tRNA-dihydrouridine(20/20a) synthase from Vibrio cholerae serotype O1 (strain ATCC 39315 / El Tor Inaba N16961).